Here is a 183-residue protein sequence, read N- to C-terminus: Dual-action ribosomal maturation protein DarP (183 aa).

The protein belongs to the DarP family.

It localises to the cytoplasm. Member of a network of 50S ribosomal subunit biogenesis factors which assembles along the 30S-50S interface, preventing incorrect 23S rRNA structures from forming. Promotes peptidyl transferase center (PTC) maturation. The polypeptide is Dual-action ribosomal maturation protein DarP (Salmonella gallinarum (strain 287/91 / NCTC 13346)).